The following is a 354-amino-acid chain: MHHPLPPDDTLYDQVRPILWTGHFLKLLDQRKLPFVVEYVECHSSEDVTQAIRALIVRGAPAIGIVAGWGAVLAAREIEAVDGIEALRKLEPALQRLHAARPTAVNLAWVLARMRRTLSAAHADWRQAMAREAESIAREDLTANRCMGAYGAALIPIGSGVLTHCNTGSLATAGFGTALGVIRAGIAQGRIARVFAGETRPWLQGARLTVWELQQDGIDVTLIADSAAAHLMKSGQVQWVIVGADRICANGDAANKIGTYQLAITARHHGVKFMVVASAATVDMDTTAGEAIEIEQRDPEELLGVSGVRTVAEGIAAWNPVFDVTPGALIDAIVTERGVIQSPDAAQMRATFGN.

Substrate is bound by residues 58-60 (RGA), R101, and Q204. D245 acts as the Proton donor in catalysis. 255–256 (NK) contributes to the substrate binding site.

The protein belongs to the eIF-2B alpha/beta/delta subunits family. MtnA subfamily.

It catalyses the reaction 5-(methylsulfanyl)-alpha-D-ribose 1-phosphate = 5-(methylsulfanyl)-D-ribulose 1-phosphate. It participates in amino-acid biosynthesis; L-methionine biosynthesis via salvage pathway; L-methionine from S-methyl-5-thio-alpha-D-ribose 1-phosphate: step 1/6. Its function is as follows. Catalyzes the interconversion of methylthioribose-1-phosphate (MTR-1-P) into methylthioribulose-1-phosphate (MTRu-1-P). This Xylella fastidiosa (strain 9a5c) protein is Methylthioribose-1-phosphate isomerase.